A 32-amino-acid polypeptide reads, in one-letter code: Cytochrome b6-f complex subunit 7 (32 aa).

A helical membrane pass occupies residues 5-25 (IFGTAAIFWVLIPIGLVGGAL).

It belongs to the PetM family. In terms of assembly, the 4 large subunits of the cytochrome b6-f complex are cytochrome b6, subunit IV (17 kDa polypeptide, PetD), cytochrome f and the Rieske protein, while the 4 small subunits are PetG, PetL, PetM and PetN. The complex functions as a dimer.

The protein resides in the cellular thylakoid membrane. Its function is as follows. Component of the cytochrome b6-f complex, which mediates electron transfer between photosystem II (PSII) and photosystem I (PSI), cyclic electron flow around PSI, and state transitions. The protein is Cytochrome b6-f complex subunit 7 of Synechococcus sp. (strain CC9902).